The primary structure comprises 278 residues: HTH-type transcriptional activator RhaS (278 aa).

Positions 174 to 272 (NQLMAWLEDH…NWSPRDIRQG (99 aa)) constitute an HTH araC/xylS-type domain. 2 DNA-binding regions (H-T-H motif) span residues 191-212 (EAVAEQFSLSLRTLHRQLKQHT) and 239-262 (VTEIAYRCGFGDSNHFSTLFRREF).

Binds DNA as a dimer.

It localises to the cytoplasm. Activates expression of the rhaBAD and rhaT operons. This is HTH-type transcriptional activator RhaS from Salmonella agona (strain SL483).